The following is a 177-amino-acid chain: ATP-dependent protease subunit HslV (177 aa).

Residue threonine 2 is part of the active site. Na(+) is bound by residues alanine 159, aspartate 162, and threonine 165.

Belongs to the peptidase T1B family. HslV subfamily. A double ring-shaped homohexamer of HslV is capped on each side by a ring-shaped HslU homohexamer. The assembly of the HslU/HslV complex is dependent on binding of ATP.

It is found in the cytoplasm. It catalyses the reaction ATP-dependent cleavage of peptide bonds with broad specificity.. With respect to regulation, allosterically activated by HslU binding. Its function is as follows. Protease subunit of a proteasome-like degradation complex believed to be a general protein degrading machinery. This is ATP-dependent protease subunit HslV from Lactobacillus leichmannii.